A 561-amino-acid polypeptide reads, in one-letter code: Dihydroxy-acid dehydratase (561 aa).

Position 80 (aspartate 80) interacts with Mg(2+). Cysteine 121 is a binding site for [2Fe-2S] cluster. Aspartate 122 and lysine 123 together coordinate Mg(2+). At lysine 123 the chain carries N6-carboxylysine. Residue cysteine 194 coordinates [2Fe-2S] cluster. Glutamate 448 serves as a coordination point for Mg(2+). Catalysis depends on serine 474, which acts as the Proton acceptor.

Belongs to the IlvD/Edd family. Homodimer. [2Fe-2S] cluster is required as a cofactor. The cofactor is Mg(2+).

It catalyses the reaction (2R)-2,3-dihydroxy-3-methylbutanoate = 3-methyl-2-oxobutanoate + H2O. The enzyme catalyses (2R,3R)-2,3-dihydroxy-3-methylpentanoate = (S)-3-methyl-2-oxopentanoate + H2O. It participates in amino-acid biosynthesis; L-isoleucine biosynthesis; L-isoleucine from 2-oxobutanoate: step 3/4. The protein operates within amino-acid biosynthesis; L-valine biosynthesis; L-valine from pyruvate: step 3/4. Its function is as follows. Functions in the biosynthesis of branched-chain amino acids. Catalyzes the dehydration of (2R,3R)-2,3-dihydroxy-3-methylpentanoate (2,3-dihydroxy-3-methylvalerate) into 2-oxo-3-methylpentanoate (2-oxo-3-methylvalerate) and of (2R)-2,3-dihydroxy-3-methylbutanoate (2,3-dihydroxyisovalerate) into 2-oxo-3-methylbutanoate (2-oxoisovalerate), the penultimate precursor to L-isoleucine and L-valine, respectively. The polypeptide is Dihydroxy-acid dehydratase (Anaeromyxobacter sp. (strain Fw109-5)).